The primary structure comprises 314 residues: ATP synthase gamma chain (314 aa).

Belongs to the ATPase gamma chain family. As to quaternary structure, F-type ATPases have 2 components, CF(1) - the catalytic core - and CF(0) - the membrane proton channel. CF(1) has five subunits: alpha(3), beta(3), gamma(1), delta(1), epsilon(1). CF(0) has three main subunits: a, b and c.

It is found in the cell membrane. Its function is as follows. Produces ATP from ADP in the presence of a proton gradient across the membrane. The gamma chain is believed to be important in regulating ATPase activity and the flow of protons through the CF(0) complex. The polypeptide is ATP synthase gamma chain (Cutibacterium acnes (strain DSM 16379 / KPA171202) (Propionibacterium acnes)).